The following is a 206-amino-acid chain: Cytochrome b6-f complex iron-sulfur subunit, chloroplastic (206 aa).

The N-terminal 29 residues, 1–29, are a transit peptide targeting the chloroplast; that stretch reads MAMITSRRAAAPCKAQATRRSRVMSVVRA. Residues 48–68 traverse the membrane as a helical segment; the sequence is ILLGGASLPVGSLALGYGAFF. Positions 92-188 constitute a Rieske domain; it reads ANAWLATHQK…CDVQEDGLVT (97 aa). [2Fe-2S] cluster contacts are provided by Cys-134, His-136, Cys-152, and His-155. Cys-139 and Cys-154 are oxidised to a cystine.

It belongs to the Rieske iron-sulfur protein family. As to quaternary structure, the 4 large subunits of the cytochrome b6-f complex are cytochrome b6, subunit IV (17 kDa polypeptide, petD), cytochrome f and the Rieske protein, while the 4 small subunits are petG, petL, petM and petN. The complex functions as a dimer. It depends on [2Fe-2S] cluster as a cofactor.

It is found in the plastid. It localises to the chloroplast thylakoid membrane. It carries out the reaction 2 oxidized [plastocyanin] + a plastoquinol + 2 H(+)(in) = 2 reduced [plastocyanin] + a plastoquinone + 4 H(+)(out). Component of the cytochrome b6-f complex, which mediates electron transfer between photosystem II (PSII) and photosystem I (PSI), cyclic electron flow around PSI, and state transitions. The protein is Cytochrome b6-f complex iron-sulfur subunit, chloroplastic (petC) of Volvox carteri (Green alga).